The primary structure comprises 514 residues: 2-isopropylmalate synthase (514 aa).

One can recognise a Pyruvate carboxyltransferase domain in the interval 5-268 (LIIFDTTLRD…DVGIDTTQIV (264 aa)). Positions 14, 202, 204, and 239 each coordinate Mn(2+). The interval 395-514 (KFVSLSQHSE…KDDKLNPQRS (120 aa)) is regulatory domain.

This sequence belongs to the alpha-IPM synthase/homocitrate synthase family. LeuA type 1 subfamily. As to quaternary structure, homodimer. It depends on Mn(2+) as a cofactor.

Its subcellular location is the cytoplasm. It catalyses the reaction 3-methyl-2-oxobutanoate + acetyl-CoA + H2O = (2S)-2-isopropylmalate + CoA + H(+). Its pathway is amino-acid biosynthesis; L-leucine biosynthesis; L-leucine from 3-methyl-2-oxobutanoate: step 1/4. In terms of biological role, catalyzes the condensation of the acetyl group of acetyl-CoA with 3-methyl-2-oxobutanoate (2-ketoisovalerate) to form 3-carboxy-3-hydroxy-4-methylpentanoate (2-isopropylmalate). The polypeptide is 2-isopropylmalate synthase (Burkholderia multivorans (strain ATCC 17616 / 249)).